We begin with the raw amino-acid sequence, 69 residues long: uncharacterized protein (69 aa).

2 disordered regions span residues 1 to 32 (MSAPYKNLDRDTKHTHPKLNETERNLNRGWGD) and 44 to 69 (QSDADKQLAEDKMETKYEKSKPAPSD). Composition is skewed to basic and acidic residues over residues 7–32 (NLDRDTKHTHPKLNETERNLNRGWGD) and 46–69 (DADKQLAEDKMETKYEKSKPAPSD).

This is an uncharacterized protein from Schizosaccharomyces pombe (strain 972 / ATCC 24843) (Fission yeast).